The chain runs to 61 residues: Putative antitoxin VapB13 (61 aa).

Belongs to the UPF0165 family.

Its function is as follows. Possibly the antitoxin component of a type II toxin-antitoxin (TA) system. Its cognate toxin is VapC13 (Potential). The sequence is that of Putative antitoxin VapB13 (vapB13) from Archaeoglobus fulgidus (strain ATCC 49558 / DSM 4304 / JCM 9628 / NBRC 100126 / VC-16).